The chain runs to 250 residues: MSQAAETLDGWYSLHLFYAVDWASLRLAPKDERDALVTELQSFLENTATVRSSKSGDQAIYNITGQKADLLLWFLRPEMKSLNHIENEFNKLRIADFLIPTYSYVSVIELSNYLAGKSDEDPYENPHIKARLYPELPHSDYICFYPMNKRRNETYNWYMLTMEERQKLMYDHGMIGRKYAGKIKQFITGSVGFDDFEWGVTLFSDDVLQFKKIVYEMRFDETTARYGEFGSFFVGHIINTNEFDQFFAIS.

Residues Arg131, 145–149 (YPMNK), His172, and Gln185 each bind Fe-coproporphyrin III. Tyr145 is an active-site residue.

This sequence belongs to the ChdC family. Type 1 subfamily. Fe-coproporphyrin III serves as cofactor.

It carries out the reaction Fe-coproporphyrin III + 2 H2O2 + 2 H(+) = heme b + 2 CO2 + 4 H2O. The catalysed reaction is Fe-coproporphyrin III + H2O2 + H(+) = harderoheme III + CO2 + 2 H2O. The enzyme catalyses harderoheme III + H2O2 + H(+) = heme b + CO2 + 2 H2O. Its pathway is porphyrin-containing compound metabolism; protoheme biosynthesis. Its function is as follows. Involved in coproporphyrin-dependent heme b biosynthesis. Catalyzes the decarboxylation of Fe-coproporphyrin III (coproheme) to heme b (protoheme IX), the last step of the pathway. The reaction occurs in a stepwise manner with a three-propionate intermediate. This Staphylococcus aureus (strain bovine RF122 / ET3-1) protein is Coproheme decarboxylase.